We begin with the raw amino-acid sequence, 255 residues long: 5'-nucleotidase SurE (255 aa).

The a divalent metal cation site is built by Asp-8, Asp-9, Ser-40, and Asn-95.

This sequence belongs to the SurE nucleotidase family. A divalent metal cation serves as cofactor.

The protein resides in the cytoplasm. The enzyme catalyses a ribonucleoside 5'-phosphate + H2O = a ribonucleoside + phosphate. Its function is as follows. Nucleotidase that shows phosphatase activity on nucleoside 5'-monophosphates. The polypeptide is 5'-nucleotidase SurE (Solidesulfovibrio magneticus (strain ATCC 700980 / DSM 13731 / RS-1) (Desulfovibrio magneticus)).